A 221-amino-acid chain; its full sequence is uncharacterized protein (221 aa).

Residues 77–96 (YRERAVELGVPERAILVEPN) constitute a DNA-binding region (H-T-H motif).

The protein to E.coli YdcF.

The imp locus inhibits the extrachromosomal maintenance of the streptomyces plasmid SLP1. May function as a transcriptional activator. This is an uncharacterized protein from Streptomyces coelicolor (strain ATCC BAA-471 / A3(2) / M145).